We begin with the raw amino-acid sequence, 508 residues long: Phytepsin (508 aa).

An N-terminal signal peptide occupies residues 1–27; sequence MGTRGLALALLAAVLLLQTVLPAASEA. Residues 28–66 constitute a propeptide, activation peptide; that stretch reads EGLVRIALKKRPIDRNSRVATGLSGGEEQPLLSGANPLR. The Peptidase A1 domain maps to 84 to 505; that stretch reads YFGEIGVGTP…DYGKLRIGFA (422 aa). Asp102 is an active-site residue. Cystine bridges form between Cys115/Cys121 and Cys280/Cys284. Residue Asp289 is part of the active site. Residues 314–419 enclose the Saposin B-type domain; sequence VVSQECKTIV…NQLCNRLPSP (106 aa). 4 disulfide bridges follow: Cys319–Cys413, Cys344–Cys385, Cys350–Cys382, and Cys427–Cys464. A glycan (N-linked (GlcNAc...) asparagine) is linked at Asn399.

It belongs to the peptidase A1 family. In terms of assembly, heterodimer of two subunits (29 kDa and 11 kDa) processed from the precursor molecule. A large enzyme (32 kDa and 16 kDa) is an intermediate precursor form. In terms of tissue distribution, embryo and leaf.

It is found in the vacuole. It carries out the reaction Prefers hydrophobic residues Phe, Val, Ile, Leu, and Ala at P1 and P1', but also cleaves -Phe-|-Asp- and -Asp-|-Asp- bonds in 2S albumin from plant seeds.. Involved in the breakdown of propeptides of storage proteins in protein-storage vacuoles. The chain is Phytepsin from Hordeum vulgare (Barley).